A 293-amino-acid polypeptide reads, in one-letter code: Aromatic amino acid exporter YddG (293 aa).

At 1 to 6 the chain is on the cytoplasmic side; the sequence is MTRQKA. Residues 6 to 137 form the EamA 1 domain; the sequence is ATLIGLIAIV…LALVGVCWVL (132 aa). A helical transmembrane segment spans residues 7–27; sequence TLIGLIAIVLWSTMVGLIRGV. The Periplasmic portion of the chain corresponds to 28–33; sequence SEGLGP. A helical membrane pass occupies residues 34–54; sequence VGGAAAIYSLSGLLLIFTVGF. Over 55 to 62 the chain is Cytoplasmic; that stretch reads PRIRQIPK. The chain crosses the membrane as a helical span at residues 63–83; the sequence is GYLLAGSLLFVSYEICLALSL. Residues 84–92 are Periplasmic-facing; that stretch reads GYAATHHQA. The chain crosses the membrane as a helical span at residues 93 to 113; the sequence is IEVGMVNYLWPSLTILFAILF. The Cytoplasmic segment spans residues 114–118; the sequence is NGQKT. A helical membrane pass occupies residues 119 to 139; that stretch reads NWLIVPGLLLALVGVCWVLGG. The Periplasmic portion of the chain corresponds to 140–155; it reads DNGLHYDEIINNITTS. Residues 156 to 176 traverse the membrane as a helical segment; that stretch reads PLSYFLAFIGAFIWAAYCTVT. The EamA 2 domain maps to 158 to 285; the sequence is SYFLAFIGAF…ALMVCGGSLL (128 aa). At 177-182 the chain is on the cytoplasmic side; that stretch reads NKYARG. The helical transmembrane segment at 183 to 203 threads the bilayer; that stretch reads FNGITVFVLLTGASLWVYYFL. Residues 204–218 lie on the Periplasmic side of the membrane; sequence TPQPEMIFSTPVMIK. Residues 219–239 form a helical membrane-spanning segment; the sequence is LISAAFTLGFAYAAWNVGILH. Residues 240-243 are Cytoplasmic-facing; sequence GNVT. Residues 244–264 traverse the membrane as a helical segment; the sequence is IMAVGSYFTPVLSSALAAVLL. Over 265–267 the chain is Periplasmic; sequence SAP. Residues 268–288 traverse the membrane as a helical segment; that stretch reads LSFSFWQGALMVCGGSLLCWL. The Cytoplasmic segment spans residues 289–293; it reads ATRRG.

The protein belongs to the drug/metabolite transporter (DMT) superfamily. Aromatic amino acid/paraquat exporter (ArAA/P-E) (TC 2.A.7.17) family.

It localises to the cell inner membrane. The enzyme catalyses L-phenylalanine(in) = L-phenylalanine(out). It carries out the reaction L-tyrosine(in) = L-tyrosine(out). The catalysed reaction is L-tryptophan(in) = L-tryptophan(out). It catalyses the reaction L-threonine(in) = L-threonine(out). The enzyme catalyses L-methionine(in) = L-methionine(out). It carries out the reaction L-lysine(in) = L-lysine(out). The catalysed reaction is L-glutamate(out) = L-glutamate(in). It catalyses the reaction L-valine(in) = L-valine(out). The enzyme catalyses L-isoleucine(in) = L-isoleucine(out). Its function is as follows. Amino acid transporter with broad substrate specificity. Can transport various amino acids, including phenylalanine, tyrosine, tryptophan, L-threonine, L-methionine, L-lysine, L-glutamate, L-valine and L-isoleucine. Overexpression confers resistance to phenylalanine and increases export of phenylalanine, tyrosine and tryptophan. In Escherichia coli (strain K12), this protein is Aromatic amino acid exporter YddG (yddG).